A 103-amino-acid polypeptide reads, in one-letter code: MSANVTLLLIFVTLASVTAQTFQYSRGWTNGKRDQGHLRPELKELINNMDKILSPCQKNKLKYLLEGKPVTERLLIPCDILDTEEYPRALTERNLNAMMDAFY.

The N-terminal stretch at 1 to 19 (MSANVTLLLIFVTLASVTA) is a signal peptide. Glutamine 20 carries the post-translational modification Pyrrolidone carboxylic acid. Asparagine 30 is subject to Asparagine amide. The propeptide occupies 34–103 (DQGHLRPELK…NLNAMMDAFY (70 aa)).

In terms of tissue distribution, expressed in corpora cardiaca (CC), corpora allata (CA), antennal lobe (AL) and gnathal ganglion (GNG) (at protein level). Expression in CC and CA detected in all animals, expression in AL and in GNG in some animals.

The protein resides in the secreted. Functionally, cardioactive peptide. Corazonin is probably involved in the physiological regulation of the heart beat. This is Pro-corazonin from Agrotis ipsilon (Black cutworm moth).